Here is a 90-residue protein sequence, read N- to C-terminus: Small ribosomal subunit protein uS19 (90 aa).

This sequence belongs to the universal ribosomal protein uS19 family.

Protein S19 forms a complex with S13 that binds strongly to the 16S ribosomal RNA. The polypeptide is Small ribosomal subunit protein uS19 (Hydrogenovibrio crunogenus (strain DSM 25203 / XCL-2) (Thiomicrospira crunogena)).